Consider the following 346-residue polypeptide: N-acetyl-gamma-glutamyl-phosphate reductase (346 aa).

Residue C150 is part of the active site.

It belongs to the NAGSA dehydrogenase family. Type 1 subfamily.

The protein resides in the cytoplasm. The enzyme catalyses N-acetyl-L-glutamate 5-semialdehyde + phosphate + NADP(+) = N-acetyl-L-glutamyl 5-phosphate + NADPH + H(+). Its pathway is amino-acid biosynthesis; L-arginine biosynthesis; N(2)-acetyl-L-ornithine from L-glutamate: step 3/4. Catalyzes the NADPH-dependent reduction of N-acetyl-5-glutamyl phosphate to yield N-acetyl-L-glutamate 5-semialdehyde. The sequence is that of N-acetyl-gamma-glutamyl-phosphate reductase from Desulforudis audaxviator (strain MP104C).